A 101-amino-acid chain; its full sequence is Citrate lyase acyl carrier protein (101 aa).

Ser14 carries the O-(phosphoribosyl dephospho-coenzyme A)serine modification.

The protein belongs to the CitD family. In terms of assembly, oligomer with a subunit composition of (alpha,beta,gamma)6.

Its subcellular location is the cytoplasm. Functionally, covalent carrier of the coenzyme of citrate lyase. The protein is Citrate lyase acyl carrier protein of Streptococcus uberis (strain ATCC BAA-854 / 0140J).